Reading from the N-terminus, the 79-residue chain is Serine protease inhibitor Kazal-type 1-like (79 aa).

The first 23 residues, 1 to 23 (MKVAIIFLLSALALLNLAGNTTA), serve as a signal peptide directing secretion. Positions 26–79 (IGKKANCPNTLVGCPRDYDPVCGTDGKTYANECILCFENRKFGTSIRIQRRGLC) constitute a Kazal-like domain. Disulfide bonds link C32-C61, C39-C58, and C47-C79.

Seminal vesicle.

It is found in the secreted. Functionally, serine protease inhibitor which exhibits anti-trypsin activity. In the pancreas, protects against trypsin-catalyzed premature activation of zymogens. In terms of biological role, in the male reproductive tract, binds to sperm heads where it modulates sperm capacitance by inhibiting calcium uptake and nitrogen oxide (NO) production. The chain is Serine protease inhibitor Kazal-type 1-like from Rattus norvegicus (Rat).